The sequence spans 157 residues: 2-C-methyl-D-erythritol 2,4-cyclodiphosphate synthase (157 aa).

Residues D8 and H10 each contribute to the a divalent metal cation site. 4-CDP-2-C-methyl-D-erythritol 2-phosphate contacts are provided by residues 8–10 and 34–35; these read DVH and HS. H42 contributes to the a divalent metal cation binding site. Residues 56-58, 61-65, 132-135, F139, and R142 contribute to the 4-CDP-2-C-methyl-D-erythritol 2-phosphate site; these read DIG, FPDSD, and TTTE.

The protein belongs to the IspF family. As to quaternary structure, homotrimer. A divalent metal cation is required as a cofactor.

It catalyses the reaction 4-CDP-2-C-methyl-D-erythritol 2-phosphate = 2-C-methyl-D-erythritol 2,4-cyclic diphosphate + CMP. It participates in isoprenoid biosynthesis; isopentenyl diphosphate biosynthesis via DXP pathway; isopentenyl diphosphate from 1-deoxy-D-xylulose 5-phosphate: step 4/6. Involved in the biosynthesis of isopentenyl diphosphate (IPP) and dimethylallyl diphosphate (DMAPP), two major building blocks of isoprenoid compounds. Catalyzes the conversion of 4-diphosphocytidyl-2-C-methyl-D-erythritol 2-phosphate (CDP-ME2P) to 2-C-methyl-D-erythritol 2,4-cyclodiphosphate (ME-CPP) with a corresponding release of cytidine 5-monophosphate (CMP). This is 2-C-methyl-D-erythritol 2,4-cyclodiphosphate synthase from Syntrophomonas wolfei subsp. wolfei (strain DSM 2245B / Goettingen).